The sequence spans 352 residues: Phenylalanine--tRNA ligase alpha subunit (352 aa).

Residue Glu258 participates in Mg(2+) binding.

The protein belongs to the class-II aminoacyl-tRNA synthetase family. Phe-tRNA synthetase alpha subunit type 1 subfamily. In terms of assembly, tetramer of two alpha and two beta subunits. The cofactor is Mg(2+).

It localises to the cytoplasm. It carries out the reaction tRNA(Phe) + L-phenylalanine + ATP = L-phenylalanyl-tRNA(Phe) + AMP + diphosphate + H(+). This chain is Phenylalanine--tRNA ligase alpha subunit, found in Staphylococcus saprophyticus subsp. saprophyticus (strain ATCC 15305 / DSM 20229 / NCIMB 8711 / NCTC 7292 / S-41).